The chain runs to 541 residues: Membrane protein insertase YidC (541 aa).

A helical transmembrane segment spans residues Ser-6–Asp-26. Residues Glu-34–Ile-56 are disordered. 4 helical membrane-spanning segments follow: residues Phe-337–Val-357, Leu-416–Phe-436, Leu-454–Leu-474, and Pro-495–Val-515.

This sequence belongs to the OXA1/ALB3/YidC family. Type 1 subfamily. As to quaternary structure, interacts with the Sec translocase complex via SecD. Specifically interacts with transmembrane segments of nascent integral membrane proteins during membrane integration.

The protein resides in the cell inner membrane. Its function is as follows. Required for the insertion and/or proper folding and/or complex formation of integral membrane proteins into the membrane. Involved in integration of membrane proteins that insert both dependently and independently of the Sec translocase complex, as well as at least some lipoproteins. Aids folding of multispanning membrane proteins. The protein is Membrane protein insertase YidC of Haemophilus influenzae (strain 86-028NP).